A 592-amino-acid chain; its full sequence is UvrABC system protein C (592 aa).

The 78-residue stretch at 15–92 (ALPGCYLMKD…IQKHQPYFNI (78 aa)) folds into the GIY-YIG domain. In terms of domain architecture, UVR spans 197–232 (DNVKKDLTEKMATAAQEMQFERAAELRDQLRYIEAT).

Belongs to the UvrC family. As to quaternary structure, interacts with UvrB in an incision complex.

It localises to the cytoplasm. Functionally, the UvrABC repair system catalyzes the recognition and processing of DNA lesions. UvrC both incises the 5' and 3' sides of the lesion. The N-terminal half is responsible for the 3' incision and the C-terminal half is responsible for the 5' incision. The chain is UvrABC system protein C from Latilactobacillus sakei subsp. sakei (strain 23K) (Lactobacillus sakei subsp. sakei).